The primary structure comprises 54 residues: U-myrmicitoxin(01)-Tb5a (54 aa).

A signal peptide spans 1 to 26; it reads MQLSHLLLAFAMIFVMTIMYAPQVQA. Residues 27–38 constitute a propeptide that is removed on maturation; that stretch reads DAWADANADADV.

Belongs to the formicidae venom precursor-01 superfamily. In terms of processing, contains 1 disulfide bond. In terms of tissue distribution, expressed by the venom gland.

The protein localises to the secreted. This is U-myrmicitoxin(01)-Tb5a from Tetramorium bicarinatum (Tramp ant).